The following is a 383-amino-acid chain: F-box/kelch-repeat protein At4g19330 (383 aa).

The interval 1 to 27 is disordered; it reads MAYLSFKSNMERTPRESNTPCPPPQPS. Residues 28 to 79 enclose the F-box domain; the sequence is PSLFSSLPDDIVLNILARISTSYYQTLSLVSKTFRLLILSKELDMERSYLGT. 3 Kelch repeats span residues 147–192, 193–239, and 272–318; these read ETYE…VLDG, KLYV…NIQT, and STCE…SEIG.

Functionally, involved in seed germination. This is F-box/kelch-repeat protein At4g19330 from Arabidopsis thaliana (Mouse-ear cress).